We begin with the raw amino-acid sequence, 66 residues long: Large ribosomal subunit protein bL33c (66 aa).

This sequence belongs to the bacterial ribosomal protein bL33 family.

It localises to the plastid. It is found in the chloroplast. The chain is Large ribosomal subunit protein bL33c from Crucihimalaya wallichii (Rock-cress).